Here is a 100-residue protein sequence, read N- to C-terminus: Small ribosomal subunit protein uS14c (100 aa).

The tract at residues 1-31 is disordered; the sequence is MARKSLIQREKKRQKLEQKYHSIRRSSKKEI.

The protein belongs to the universal ribosomal protein uS14 family. As to quaternary structure, part of the 30S ribosomal subunit.

It localises to the plastid. Its subcellular location is the chloroplast. In terms of biological role, binds 16S rRNA, required for the assembly of 30S particles. This is Small ribosomal subunit protein uS14c from Solanum bulbocastanum (Wild potato).